A 120-amino-acid chain; its full sequence is Spermidine export protein MdtJ (120 aa).

4 helical membrane passes run 1–21 (MFYW…TLSM), 31–51 (TGFI…SFAV), 54–74 (IALG…ITLF), and 81–101 (EALS…IVLI).

Belongs to the drug/metabolite transporter (DMT) superfamily. Small multidrug resistance (SMR) (TC 2.A.7.1) family. MdtJ subfamily. Forms a complex with MdtI.

It localises to the cell inner membrane. In terms of biological role, catalyzes the excretion of spermidine. The polypeptide is Spermidine export protein MdtJ (Enterobacter sp. (strain 638)).